A 284-amino-acid polypeptide reads, in one-letter code: Ribosomal RNA small subunit methyltransferase A (284 aa).

S-adenosyl-L-methionine-binding residues include N26, L28, G53, E74, D97, and N127.

The protein belongs to the class I-like SAM-binding methyltransferase superfamily. rRNA adenine N(6)-methyltransferase family. RsmA subfamily.

It localises to the cytoplasm. The catalysed reaction is adenosine(1518)/adenosine(1519) in 16S rRNA + 4 S-adenosyl-L-methionine = N(6)-dimethyladenosine(1518)/N(6)-dimethyladenosine(1519) in 16S rRNA + 4 S-adenosyl-L-homocysteine + 4 H(+). In terms of biological role, specifically dimethylates two adjacent adenosines (A1518 and A1519) in the loop of a conserved hairpin near the 3'-end of 16S rRNA in the 30S particle. May play a critical role in biogenesis of 30S subunits. The polypeptide is Ribosomal RNA small subunit methyltransferase A (Anaeromyxobacter dehalogenans (strain 2CP-C)).